The following is a 321-amino-acid chain: Methionine import ATP-binding protein MetN (321 aa).

The ABC transporter domain occupies 2–237 (ISIKNVNKYY…NTKGLRKLIG (236 aa)). Position 34-41 (34-41 (GHSGAGKS)) interacts with ATP.

Belongs to the ABC transporter superfamily. Methionine importer (TC 3.A.1.24) family. As to quaternary structure, the complex is composed of two ATP-binding proteins (MetN), two transmembrane proteins (MetI) and a solute-binding protein (MetQ).

The protein resides in the cell membrane. It catalyses the reaction L-methionine(out) + ATP + H2O = L-methionine(in) + ADP + phosphate + H(+). The enzyme catalyses D-methionine(out) + ATP + H2O = D-methionine(in) + ADP + phosphate + H(+). Its function is as follows. Part of the ABC transporter complex MetNIQ involved in methionine import. Responsible for energy coupling to the transport system. The protein is Methionine import ATP-binding protein MetN of Clostridioides difficile (strain 630) (Peptoclostridium difficile).